A 605-amino-acid polypeptide reads, in one-letter code: Glucose oxidase (605 aa).

An N-terminal signal peptide occupies residues 1–16 (MKTILSSSLVVSMAAA). FAD is bound by residues Leu-51 and Thr-52. A glycan (N-linked (GlcNAc...) asparagine) is linked at Asn-65. Glu-72 is an FAD binding site. The N-linked (GlcNAc...) asparagine glycan is linked to Asn-111. Positions 125, 129, 130, and 132 each coordinate FAD. Cys-186 and Cys-228 are oxidised to a cystine. Asn-190 is a glycosylation site (N-linked (GlcNAc...) asparagine). Val-272 contributes to the FAD binding site. Residues Asn-280, Asn-377, Asn-410, and Asn-495 are each glycosylated (N-linked (GlcNAc...) asparagine). Catalysis depends on His-538, which acts as the Proton acceptor. Positions 559 and 560 each coordinate O2. The FAD site is built by Gly-571 and Met-583.

Belongs to the GMC oxidoreductase family. In terms of assembly, homodimer. It depends on FAD as a cofactor.

Its subcellular location is the secreted. It localises to the cell wall. It is found in the cytoplasm. The protein localises to the extracellular space. The protein resides in the extracellular matrix. It catalyses the reaction beta-D-glucose + O2 = D-glucono-1,5-lactone + H2O2. In terms of biological role, glucose oxidase catalyzes the oxidation of beta-D-glucose to D-glucono-delta-lactone and hydrogen peroxide in the presence of molecular oxygen. Acts as a critical factor modulating pathogenicity by controlling transcription of genes important for fungal secondary metabolism and infection such as those coding for enzymes involved in degradation of the host cell wall. This is Glucose oxidase from Aspergillus carbonarius (strain ITEM 5010).